The following is a 516-amino-acid chain: BAR/IMD domain-containing adapter protein 2-like 2 (516 aa).

Residues 1–227 (MSGVNSDLLH…PTPLDQEAQL (227 aa)) form the IMD domain. The disordered stretch occupies residues 200–273 (ADGWKEKVSE…SSSVGESLGL (74 aa)). Residues 201 to 212 (DGWKEKVSESRS) show a composition bias toward basic and acidic residues. A compositionally biased stretch (polar residues) spans 226-236 (QLKSSVGSLLQ). Residues 238 to 247 (GDREMDREPL) are compositionally biased toward basic and acidic residues. Residues 249-270 (RVPSRAPSPLPSRSRSSSVGES) show a composition bias toward low complexity. The region spanning 274–337 (GGGRSMRAIV…PAAYVASTED (64 aa)) is the SH3 domain. Positions 355–376 (LLEPTSQSESDTQTYSEVSSPV) are enriched in polar residues. Residues 355–516 (LLEPTSQSES…TNDRSAPRIQ (162 aa)) form a disordered region. Basic and acidic residues predominate over residues 434-450 (PDRRAESHFESKVELKN). Residues 454–465 (LPPPAPPLPNSP) are compositionally biased toward pro residues.

It localises to the cell membrane. Phosphoinositides-binding protein that induces the formation of planar or gently curved membrane structures. This Danio rerio (Zebrafish) protein is BAR/IMD domain-containing adapter protein 2-like 2 (baiap2l2).